The following is a 101-amino-acid chain: Urease subunit beta (101 aa).

The protein belongs to the urease beta subunit family. As to quaternary structure, heterotrimer of UreA (gamma), UreB (beta) and UreC (alpha) subunits. Three heterotrimers associate to form the active enzyme.

The protein localises to the cytoplasm. The enzyme catalyses urea + 2 H2O + H(+) = hydrogencarbonate + 2 NH4(+). The protein operates within nitrogen metabolism; urea degradation; CO(2) and NH(3) from urea (urease route): step 1/1. The polypeptide is Urease subunit beta (Roseobacter denitrificans (strain ATCC 33942 / OCh 114) (Erythrobacter sp. (strain OCh 114))).